The sequence spans 227 residues: tRNA (guanine-N(1)-)-methyltransferase (227 aa).

Residues Gly-112 and 132–137 contribute to the S-adenosyl-L-methionine site; that span reads IGDFIL.

Belongs to the RNA methyltransferase TrmD family. In terms of assembly, homodimer.

The protein resides in the cytoplasm. The enzyme catalyses guanosine(37) in tRNA + S-adenosyl-L-methionine = N(1)-methylguanosine(37) in tRNA + S-adenosyl-L-homocysteine + H(+). In terms of biological role, specifically methylates guanosine-37 in various tRNAs. In Sulfurovum sp. (strain NBC37-1), this protein is tRNA (guanine-N(1)-)-methyltransferase.